We begin with the raw amino-acid sequence, 434 residues long: MRRNRVDVITLGCSKNLVDSEVLMRQFLSNGYTVHHDPASVCGEIVVVNTCGFIGDAQEESVNTILEMVEAKKAGRIGSLYVMGCLSERFREDLKKEIPEVDAYYGKFDWKQLISHLGKSYYAEAENRRKLTTPRHYAYLKISEGCDRSCSYCAIPIITGRHRSRPMEDLVEEVRMLVKHGTREFQLIAQDLTFYGLDLYGANRLAELTARLSDIKGVEWLRLHYAYPAQFPLDLLPVMRERPNVCKYLDMALQHISDPMLGRMRRRITKAETYELIERIRTEVPGIHLRTTLMTGHPGETERDFEELLQFVRDIRFERLGAFTYSHESGTYCDKNYQDDIPESVKQERLGELMAVQERISAAHNEAKIGSRLHVVIDRAEDGFYVGRTEYDSPEVDPEVLIPFVSGQELNPGRFYMAEVTGAEPFDLYARIVD.

The MTTase N-terminal domain occupies Asn4 to Tyr122. [4Fe-4S] cluster-binding residues include Cys13, Cys51, Cys85, Cys146, Cys150, and Cys153. A Radical SAM core domain is found at Thr132 to Ala363. Residues Glu366–Asp434 enclose the TRAM domain.

This sequence belongs to the methylthiotransferase family. RimO subfamily. Requires [4Fe-4S] cluster as cofactor.

The protein resides in the cytoplasm. The catalysed reaction is L-aspartate(89)-[ribosomal protein uS12]-hydrogen + (sulfur carrier)-SH + AH2 + 2 S-adenosyl-L-methionine = 3-methylsulfanyl-L-aspartate(89)-[ribosomal protein uS12]-hydrogen + (sulfur carrier)-H + 5'-deoxyadenosine + L-methionine + A + S-adenosyl-L-homocysteine + 2 H(+). Catalyzes the methylthiolation of an aspartic acid residue of ribosomal protein uS12. This chain is Ribosomal protein uS12 methylthiotransferase RimO, found in Porphyromonas gingivalis (strain ATCC BAA-308 / W83).